An 843-amino-acid polypeptide reads, in one-letter code: Eisosome protein 1 (843 aa).

Residues 1-53 (MSLISAVEDRDIHNIGKTSGGGSRTSSITSSKKSLKHGSKSLRKPKVYQTTGE) are disordered. At S2 the chain carries N-acetylserine. Residue S2 is modified to Phosphoserine. Over residues 33 to 46 (KSLKHGSKSLRKPK) the composition is skewed to basic residues. A phosphoserine mark is found at S88 and S130. The segment at 120–174 (KMGPKVVRNNSITSATSKTSKESQTKRKSKESPGAAASKAYSMTMETTSLSSQTN) is disordered. Polar residues-rich tracts occupy residues 127–137 (RNNSITSATSK) and 163–174 (TMETTSLSSQTN). Phosphoserine occurs at positions 182, 401, 584, and 710. The segment at 717–843 (DLPTQLEKIE…QDAISNQEKK (127 aa)) is disordered. Residue T720 is modified to Phosphothreonine. Over residues 752 to 764 (STAAKEATETSSA) the composition is skewed to low complexity. Residues S763 and S775 each carry the phosphoserine modification. Over residues 781-797 (SGKEDANDCKSAEHSKE) the composition is skewed to basic and acidic residues. Residues 798–810 (ISVSQKAGNNKSL) are compositionally biased toward polar residues. Residues S816, S828, S829, and S838 each carry the phosphoserine modification.

It belongs to the EIS1 family.

It localises to the cytoplasmic granule. The protein resides in the cell membrane. Required for normal formation of eisosomes, large cytoplasmic protein assemblies that localize to specialized domains on plasma membrane and mark the site of endocytosis. The sequence is that of Eisosome protein 1 (EIS1) from Saccharomyces cerevisiae (strain ATCC 204508 / S288c) (Baker's yeast).